Consider the following 309-residue polypeptide: Porphobilinogen deaminase (309 aa).

An S-(dipyrrolylmethanemethyl)cysteine modification is found at cysteine 242.

Belongs to the HMBS family. As to quaternary structure, monomer. It depends on dipyrromethane as a cofactor.

The catalysed reaction is 4 porphobilinogen + H2O = hydroxymethylbilane + 4 NH4(+). It participates in porphyrin-containing compound metabolism; protoporphyrin-IX biosynthesis; coproporphyrinogen-III from 5-aminolevulinate: step 2/4. Functionally, tetrapolymerization of the monopyrrole PBG into the hydroxymethylbilane pre-uroporphyrinogen in several discrete steps. This is Porphobilinogen deaminase from Shewanella woodyi (strain ATCC 51908 / MS32).